Consider the following 315-residue polypeptide: Probable cell division protein WhiA (315 aa).

The segment at residues Ser277–Gln311 is a DNA-binding region (H-T-H motif).

It belongs to the WhiA family.

Involved in cell division and chromosome segregation. The chain is Probable cell division protein WhiA from Lacticaseibacillus casei (strain BL23) (Lactobacillus casei).